The following is a 642-amino-acid chain: Threonine--tRNA ligase (642 aa).

The 61-residue stretch at 1-61 folds into the TGS domain; that stretch reads MPIITLPDGS…SEDANLEIIT (61 aa). The interval 243 to 534 is catalytic; sequence DHRKIGKALN…ITEEYAGFFP (292 aa). Cys-334, His-385, and His-511 together coordinate Zn(2+).

It belongs to the class-II aminoacyl-tRNA synthetase family. Homodimer. Zn(2+) is required as a cofactor.

It localises to the cytoplasm. It carries out the reaction tRNA(Thr) + L-threonine + ATP = L-threonyl-tRNA(Thr) + AMP + diphosphate + H(+). Its function is as follows. Catalyzes the attachment of threonine to tRNA(Thr) in a two-step reaction: L-threonine is first activated by ATP to form Thr-AMP and then transferred to the acceptor end of tRNA(Thr). Also edits incorrectly charged L-seryl-tRNA(Thr). This chain is Threonine--tRNA ligase, found in Histophilus somni (strain 2336) (Haemophilus somnus).